A 564-amino-acid polypeptide reads, in one-letter code: MHSYDYWLILAFFAVVLLPAPFLGRFYYKVMEGQSTWLTPILGPVERGCYRIAGVNPQDEQSWQKYTLALLAFNLAGFLLLFAILLFQDHLPLNPQNLPGQEWTLAFNTAVSFMTNTNWQAYSGEASLSYLSQMVGLTVQNFVSAATGLAVLVALCRGIGRKSTKTLGNFWVDMTRATLYGLLPLCLLLALYLVWQGVPQTFAQYVNAVTMQGVDQVIPLGPAASQIAIKQLGTNGGGFFGVNSAHPFENPTAWSNLFEVASIILIPVALVFTFGHYVKDLRQSRAIIGCMLALFIIGGATSLWAEYQPNPALNNVTVEQAAPLEGKEARFGTTATVLWSVTTTAASNGSVNGMHDSLNPLSGMVALVNMMVGEVIFGGVGAGLYGMLLNVLIAVFLAGLMIGRTPEYLGKKLQAREVQLLVVTLLVMPVGVLVLGAIAASLPGPVAAVSNPGPHGFSQLLYAYTSASANNGSAFGGFGANTAFHNLMLGLGMLIGRFGYILPVLALAGSLAMKKTAPIGQNSFPTHGPLFVTLLTVTILLLGGLTFLPTLALGPIAEHLSMGF.

Helical transmembrane passes span 4 to 24, 67 to 87, 135 to 155, 179 to 199, 258 to 278, 286 to 306, 382 to 402, 420 to 440, 487 to 507, and 528 to 548; these read YDYWLILAFFAVVLLPAPFLG, TLALLAFNLAGFLLLFAILLF, VGLTVQNFVSAATGLAVLVAL, LYGLLPLCLLLALYLVWQGVP, FEVASIILIPVALVFTFGHYV, AIIGCMLALFIIGGATSLWAE, AGLYGMLLNVLIAVFLAGLMI, LLVVTLLVMPVGVLVLGAIAA, LMLGLGMLIGRFGYILPVLAL, and GPLFVTLLTVTILLLGGLTFL.

Belongs to the KdpA family. The system is composed of three essential subunits: KdpA, KdpB and KdpC.

The protein resides in the cell inner membrane. Part of the high-affinity ATP-driven potassium transport (or Kdp) system, which catalyzes the hydrolysis of ATP coupled with the electrogenic transport of potassium into the cytoplasm. This subunit binds the periplasmic potassium ions and delivers the ions to the membrane domain of KdpB through an intramembrane tunnel. The protein is Potassium-transporting ATPase potassium-binding subunit of Pseudomonas fluorescens (strain Pf0-1).